Here is a 590-residue protein sequence, read N- to C-terminus: Leucine-rich repeat transmembrane neuronal protein 4 (590 aa).

The signal sequence occupies residues 1-30 (MGFHLITQLKGMSVVLVLLPTLLLVMLTGA). In terms of domain architecture, LRRNT spans 31-61 (QRACPKNCRCDGKIVYCESHAFADIPENISG). Residues 31–424 (QRACPKNCRC…QEYEHVSFHK (394 aa)) lie on the Extracellular side of the membrane. Asn-58 is a glycosylation site (N-linked (GlcNAc...) asparagine). LRR repeat units follow at residues 62–83 (GSQG…QFAG), 86–107 (QLIW…AFQG), 110–131 (RLKE…TFHP), 134–155 (NLRN…QFKG), 158–179 (KLII…VFQD), 182–203 (NLDF…AFAG), 206–226 (KLKE…AHFP), 230–251 (NLRS…LTWT), 254–275 (SLHN…TFKC), and 278–299 (NLQK…TVNA). The N-linked (GlcNAc...) asparagine glycan is linked to Asn-126. Residue Asn-291 is glycosylated (N-linked (GlcNAc...) asparagine). In terms of domain architecture, LRRCT spans 311-362 (NMWECSRSICPLFYWLKNFKGNKESTMICAGPKHIQGEKVSDAVETYNICSE). The chain crosses the membrane as a helical span at residues 425–445 (IIAGSVALFLSVAMILLVIYV). Residues 446-590 (SWKRYPASMK…PAIYLERIAN (145 aa)) lie on the Cytoplasmic side of the membrane.

The protein belongs to the LRRTM family. Peripherally associated with AMPAR complex. AMPAR complex consists of an inner core made of 4 pore-forming GluA/GRIA proteins (GRIA1, GRIA2, GRIA3 and GRIA4) and 4 major auxiliary subunits arranged in a twofold symmetry. One of the two pairs of distinct binding sites is occupied either by CNIH2, CNIH3 or CACNG2, CACNG3. The other harbors CACNG2, CACNG3, CACNG4, CACNG8 or GSG1L. This inner core of AMPAR complex is complemented by outer core constituents binding directly to the GluA/GRIA proteins at sites distinct from the interaction sites of the inner core constituents. Outer core constituents include at least PRRT1, PRRT2, CKAMP44/SHISA9, FRRS1L and NRN1. The proteins of the inner and outer core serve as a platform for other, more peripherally associated AMPAR constituents, including LRRTM4. Alone or in combination, these auxiliary subunits control the gating and pharmacology of the AMPAR complex and profoundly impact their biogenesis and protein processing. As to expression, expressed in neuronal tissues.

Its subcellular location is the cell membrane. The protein localises to the postsynaptic cell membrane. May play a role in the development and maintenance of the vertebrate nervous system. Exhibits strong synaptogenic activity, restricted to excitatory presynaptic differentiation. In Homo sapiens (Human), this protein is Leucine-rich repeat transmembrane neuronal protein 4 (LRRTM4).